The following is a 357-amino-acid chain: Cobalt-precorrin-5B C(1)-methyltransferase (357 aa).

Belongs to the CbiD family.

It catalyses the reaction Co-precorrin-5B + S-adenosyl-L-methionine = Co-precorrin-6A + S-adenosyl-L-homocysteine. It functions in the pathway cofactor biosynthesis; adenosylcobalamin biosynthesis; cob(II)yrinate a,c-diamide from sirohydrochlorin (anaerobic route): step 6/10. Catalyzes the methylation of C-1 in cobalt-precorrin-5B to form cobalt-precorrin-6A. The protein is Cobalt-precorrin-5B C(1)-methyltransferase of Alkaliphilus oremlandii (strain OhILAs) (Clostridium oremlandii (strain OhILAs)).